A 311-amino-acid polypeptide reads, in one-letter code: Ribosomal RNA small subunit methyltransferase A (311 aa).

Asparagine 29, valine 31, glycine 56, glutamate 77, aspartate 107, and asparagine 126 together coordinate S-adenosyl-L-methionine.

This sequence belongs to the class I-like SAM-binding methyltransferase superfamily. rRNA adenine N(6)-methyltransferase family. RsmA subfamily.

The protein localises to the cytoplasm. The enzyme catalyses adenosine(1518)/adenosine(1519) in 16S rRNA + 4 S-adenosyl-L-methionine = N(6)-dimethyladenosine(1518)/N(6)-dimethyladenosine(1519) in 16S rRNA + 4 S-adenosyl-L-homocysteine + 4 H(+). Functionally, specifically dimethylates two adjacent adenosines (A1518 and A1519) in the loop of a conserved hairpin near the 3'-end of 16S rRNA in the 30S particle. May play a critical role in biogenesis of 30S subunits. The sequence is that of Ribosomal RNA small subunit methyltransferase A from Mycolicibacterium vanbaalenii (strain DSM 7251 / JCM 13017 / BCRC 16820 / KCTC 9966 / NRRL B-24157 / PYR-1) (Mycobacterium vanbaalenii).